The primary structure comprises 290 residues: Fructose-1,6-bisphosphatase class 1 (290 aa).

Positions 78, 96, 98, and 99 each coordinate Mg(2+). Substrate is bound by residues 99-102 (DGSS), Tyr201, and Lys226. Position 232 (Glu232) interacts with Mg(2+).

It belongs to the FBPase class 1 family. As to quaternary structure, homotetramer. Requires Mg(2+) as cofactor.

Its subcellular location is the cytoplasm. It catalyses the reaction beta-D-fructose 1,6-bisphosphate + H2O = beta-D-fructose 6-phosphate + phosphate. It participates in carbohydrate biosynthesis; gluconeogenesis. The chain is Fructose-1,6-bisphosphatase class 1 from Helicobacter acinonychis (strain Sheeba).